Consider the following 256-residue polypeptide: Thiazole synthase (256 aa).

The active-site Schiff-base intermediate with DXP is the Lys95. Residues Gly156, 182–183 (AG), and 204–205 (NT) contribute to the 1-deoxy-D-xylulose 5-phosphate site.

The protein belongs to the ThiG family. Homotetramer. Forms heterodimers with either ThiH or ThiS.

It localises to the cytoplasm. It carries out the reaction [ThiS sulfur-carrier protein]-C-terminal-Gly-aminoethanethioate + 2-iminoacetate + 1-deoxy-D-xylulose 5-phosphate = [ThiS sulfur-carrier protein]-C-terminal Gly-Gly + 2-[(2R,5Z)-2-carboxy-4-methylthiazol-5(2H)-ylidene]ethyl phosphate + 2 H2O + H(+). It participates in cofactor biosynthesis; thiamine diphosphate biosynthesis. Catalyzes the rearrangement of 1-deoxy-D-xylulose 5-phosphate (DXP) to produce the thiazole phosphate moiety of thiamine. Sulfur is provided by the thiocarboxylate moiety of the carrier protein ThiS. In vitro, sulfur can be provided by H(2)S. The polypeptide is Thiazole synthase (Escherichia coli O127:H6 (strain E2348/69 / EPEC)).